The sequence spans 377 residues: Nitric oxide reductase FlRd-NAD(+) reductase (377 aa).

This sequence belongs to the FAD-dependent oxidoreductase family. FAD is required as a cofactor.

Its subcellular location is the cytoplasm. The enzyme catalyses 2 reduced [nitric oxide reductase rubredoxin domain] + NAD(+) + H(+) = 2 oxidized [nitric oxide reductase rubredoxin domain] + NADH. Its pathway is nitrogen metabolism; nitric oxide reduction. Functionally, one of at least two accessory proteins for anaerobic nitric oxide (NO) reductase. Reduces the rubredoxin moiety of NO reductase. In Escherichia coli O45:K1 (strain S88 / ExPEC), this protein is Nitric oxide reductase FlRd-NAD(+) reductase.